We begin with the raw amino-acid sequence, 798 residues long: MKNPSFDWERLKDVFYRSRAIGELKWPTQYEEFKCALSLTVIAVEIQDFIQVYNYFGQLLGKINLQRIHEDIIKFEFDKDEKLILVTKSSIKIVKGWSPLTIESVPLQDPTIDTIWDYHNGIMLLAKSRDIYKLNGNEWELLYENKDKKYNLLTKNHWSCNDDSIILLDVDHVYQVSTSNGALLKLITDSSWHKVTISSRGFICLYNMKDNKLQIFRDPARILMEHNLDSTPDDICWCGNDTVACSFEDEIKLYGPDGLYVTFWYPFTVTNLRAEVDGLKVITTEKIYFLSRVQPQTSNIFRIGSTEPGAMLVDSFSLLEDHAPKAIEILKNFVLEKGVLDCIAAAIDEFEPKLQKMLLNAASYGKASLQYKSFDASIFVNACNTIKLLNCFRSFGIFLTVEEYRCISLKGVIDRLLKYHRYYECIQICKLANERFLLGYVFTEWAKDKIKGSPDMEDDELLDKIKSRLSVIDMTDTLQMVAVAKVAYLEGRFQLSRNLALLEKNEEARIEQLYNLDDDSIALKECIKVQNYSLTISLLIALSKKLTNSQLTKLLIIDMFNNPLYLYYMRMDKAYLYDFYRQTDRFIDLAHVLLQQGKEQQSLHSFLPQIKDLYSQVQNSEVVNNTIEQLQRQEKLWIYQESLGKRFAISFTNMTLDQTLSKLIETGQDKQVKEIVKKFKISEKKLYHLKCKTLVEAKKFDELLQFAQSRKSPIGYMPFYTYLKSRGHMDKASPYVNMIPGLSYQEKKKLYVECRGFRDAIQLAGKEKDIPGLKEIYNIIPPNEPELKALANETMSRI.

The protein belongs to the VPS16 family. As to quaternary structure, component of the HOPS complex which is composed of PEP5, VPS16, PEP3, VPS33, VPS39 and VPS41. HOPS associates with phosphoinositides and the PX domain of VAM7. Interacts with VAM7.

The protein localises to the cytoplasm. Its subcellular location is the vacuole. Essential for vacuolar protein sorting. Required for vacuole biogenesis, stability and to maintain vacuole morphology. Required for growth at elevated temperatures. Acts as a component of the HOPS complex that acts during the docking stage of vacuole fusion. HOPS is an effector for the vacuolar Rab GTPase YPT7 and is required for vacuolar SNARE complex assembly. It remains bound to SNARE complexes after vacuole fusion. The sequence is that of Vacuolar protein sorting-associated protein 16 (VPS16) from Saccharomyces cerevisiae (strain ATCC 204508 / S288c) (Baker's yeast).